A 130-amino-acid polypeptide reads, in one-letter code: Histone H2A type 2-B (130 aa).

A disordered region spans residues 1–22 (MSGRGKQGGKARAKAKSRSSRA). Serine 2 is subject to N-acetylserine. At serine 2 the chain carries Phosphoserine; by RPS6KA5. Arginine 4 carries the post-translational modification Citrulline; alternate. A Symmetric dimethylarginine; by PRMT5; alternate modification is found at arginine 4. Lysine 6 carries the N6-(2-hydroxyisobutyryl)lysine modification. Residues 7-19 (QGGKARAKAKSRS) show a composition bias toward basic residues. Residue lysine 10 is modified to N6-(2-hydroxyisobutyryl)lysine; alternate. Lysine 10 and lysine 14 each carry N6-(beta-hydroxybutyryl)lysine; alternate. Lysine 10 carries the N6-lactoyllysine; alternate modification. Lysine 10 is modified (N6-succinyllysine; alternate). Lysine 14 participates in a covalent cross-link: Glycyl lysine isopeptide (Lys-Gly) (interchain with G-Cter in ubiquitin); alternate. Lysine 16 is covalently cross-linked (Glycyl lysine isopeptide (Lys-Gly) (interchain with G-Cter in ubiquitin)). Residue lysine 37 is modified to N6-(2-hydroxyisobutyryl)lysine; alternate. Residue lysine 37 is modified to N6-(beta-hydroxybutyryl)lysine; alternate. Lysine 37 is subject to N6-crotonyllysine; alternate. N6-(2-hydroxyisobutyryl)lysine occurs at positions 75 and 76. Lysine 96 is modified (N6-(2-hydroxyisobutyryl)lysine; alternate). Lysine 96 bears the N6-(beta-hydroxybutyryl)lysine; alternate mark. Position 96 is an N6-succinyllysine; alternate (lysine 96). At lysine 96 the chain carries N6-glutaryllysine; alternate. Glutamine 105 is subject to N5-methylglutamine. Position 119 is an N6-(2-hydroxyisobutyryl)lysine; alternate (lysine 119). N6-(beta-hydroxybutyryl)lysine; alternate is present on lysine 119. Residues lysine 119 and lysine 120 each carry the N6-crotonyllysine; alternate modification. Lysine 119 and lysine 120 each carry N6-glutaryllysine; alternate. Residue lysine 120 forms a Glycyl lysine isopeptide (Lys-Gly) (interchain with G-Cter in ubiquitin); alternate linkage. Phosphothreonine; by DCAF1 is present on threonine 121.

This sequence belongs to the histone H2A family. The nucleosome is a histone octamer containing two molecules each of H2A, H2B, H3 and H4 assembled in one H3-H4 heterotetramer and two H2A-H2B heterodimers. The octamer wraps approximately 147 bp of DNA. Post-translationally, deiminated on Arg-4 in granulocytes upon calcium entry. In terms of processing, monoubiquitination of Lys-120 (H2AK119Ub) by RING1, TRIM37 and RNF2/RING2 complex gives a specific tag for epigenetic transcriptional repression and participates in X chromosome inactivation of female mammals. It is involved in the initiation of both imprinted and random X inactivation. Ubiquitinated H2A is enriched in inactive X chromosome chromatin. Ubiquitination of H2A functions downstream of methylation of 'Lys-27' of histone H3 (H3K27me). H2AK119Ub by RNF2/RING2 can also be induced by ultraviolet and may be involved in DNA repair. Monoubiquitination of Lys-120 (H2AK119Ub) by TRIM37 may promote transformation of cells in a number of breast cancers. Following DNA double-strand breaks (DSBs), it is ubiquitinated through 'Lys-63' linkage of ubiquitin moieties by the E2 ligase UBE2N and the E3 ligases RNF8 and RNF168, leading to the recruitment of repair proteins to sites of DNA damage. Ubiquitination at Lys-14 and Lys-16 (H2AK13Ub and H2AK15Ub, respectively) in response to DNA damage is initiated by RNF168 that mediates monoubiquitination at these 2 sites, and 'Lys-63'-linked ubiquitin are then conjugated to monoubiquitin; RNF8 is able to extend 'Lys-63'-linked ubiquitin chains in vitro. Deubiquitinated by USP51 at Lys-14 and Lys-16 (H2AK13Ub and H2AK15Ub, respectively) after damaged DNA is repaired. H2AK119Ub and ionizing radiation-induced 'Lys-63'-linked ubiquitination (H2AK13Ub and H2AK15Ub) are distinct events. Phosphorylation on Ser-2 (H2AS1ph) is enhanced during mitosis. Phosphorylation on Ser-2 by RPS6KA5/MSK1 directly represses transcription. Acetylation of H3 inhibits Ser-2 phosphorylation by RPS6KA5/MSK1. Phosphorylation at Thr-121 (H2AT120ph) by DCAF1 is present in the regulatory region of many tumor suppresor genes and down-regulates their transcription. Post-translationally, symmetric dimethylation on Arg-4 by the PRDM1/PRMT5 complex may play a crucial role in the germ-cell lineage. In terms of processing, glutamine methylation at Gln-105 (H2AQ104me) by FBL is specifically dedicated to polymerase I. It is present at 35S ribosomal DNA locus and impairs binding of the FACT complex. Crotonylation (Kcr) is specifically present in male germ cells and marks testis-specific genes in post-meiotic cells, including X-linked genes that escape sex chromosome inactivation in haploid cells. Crotonylation marks active promoters and enhancers and confers resistance to transcriptional repressors. It is also associated with post-meiotically activated genes on autosomes. Post-translationally, lactylated in macrophages by EP300/P300 by using lactoyl-CoA directly derived from endogenous or exogenous lactate, leading to stimulates gene transcription.

Its subcellular location is the nucleus. It localises to the chromosome. Core component of nucleosome. Nucleosomes wrap and compact DNA into chromatin, limiting DNA accessibility to the cellular machineries which require DNA as a template. Histones thereby play a central role in transcription regulation, DNA repair, DNA replication and chromosomal stability. DNA accessibility is regulated via a complex set of post-translational modifications of histones, also called histone code, and nucleosome remodeling. In Homo sapiens (Human), this protein is Histone H2A type 2-B.